Reading from the N-terminus, the 89-residue chain is Small ribosomal subunit protein uS15 (89 aa).

This sequence belongs to the universal ribosomal protein uS15 family. As to quaternary structure, part of the 30S ribosomal subunit. Forms a bridge to the 50S subunit in the 70S ribosome, contacting the 23S rRNA.

Its function is as follows. One of the primary rRNA binding proteins, it binds directly to 16S rRNA where it helps nucleate assembly of the platform of the 30S subunit by binding and bridging several RNA helices of the 16S rRNA. Functionally, forms an intersubunit bridge (bridge B4) with the 23S rRNA of the 50S subunit in the ribosome. The sequence is that of Small ribosomal subunit protein uS15 from Aliivibrio salmonicida (strain LFI1238) (Vibrio salmonicida (strain LFI1238)).